The following is a 246-amino-acid chain: Small ribosomal subunit protein uS2c (246 aa).

Belongs to the universal ribosomal protein uS2 family.

It is found in the plastid. Its subcellular location is the chloroplast. The sequence is that of Small ribosomal subunit protein uS2c (rps2) from Pelargonium hortorum (Common geranium).